The primary structure comprises 461 residues: Thyroid hormone receptor beta (461 aa).

The segment at 1-24 is disordered; sequence MTPNSMTENRLPAWDKQKPHPDRG. Residues 1-106 are modulating; that stretch reads MTPNSMTENR…IPSYLDKDEL (106 aa). Residues 13-24 are compositionally biased toward basic and acidic residues; the sequence is AWDKQKPHPDRG. Positions 107, 110, 124, 127, 145, 151, 161, and 164 each coordinate Zn(2+). NR C4-type zinc fingers lie at residues 107–127 and 145–169; these read CVVC…CEGC and CKYE…FKKC. The nuclear receptor DNA-binding region spans 107–181; that stretch reads CVVCGDKATG…VGMATDLVLD (75 aa). Positions 217-461 constitute an NR LBD domain; sequence EEWELIKTVT…PPLFLEVFED (245 aa). The interaction with NR2F6 stretch occupies residues 244–461; that stretch reads KFLPEDIGQA…PPLFLEVFED (218 aa). 3 residues coordinate 3,3',5-triiodo-L-thyronine: R282, N331, and H435. 3 residues coordinate L-thyroxine: R282, N331, and H435.

This sequence belongs to the nuclear hormone receptor family. NR1 subfamily. In terms of assembly, binds DNA as a dimer; homodimer and heterodimer with RXRA. Interacts with the coactivators NCOA1/SRC1, NCOA2/GRIP1, NCOA7 and MED1/TRAP220 in a ligand-inducible manner. Interacts with the corepressor NCOR1 in absence of ligand. Interacts with C1D. Interacts with NR2F6; the interaction impairs the binding of the THRB homodimer and THRB:RXRB heterodimer to T3 response elements. Interacts with PRMT2 and THRSP. Interacts with TACC1; this interaction is decreased in the presence of thyroid hormone T3.

It localises to the nucleus. Nuclear hormone receptor that can act as a repressor or activator of transcription. High affinity receptor for thyroid hormones, including triiodothyronine and thyroxine. The polypeptide is Thyroid hormone receptor beta (Thrb) (Rattus norvegicus (Rat)).